Consider the following 325-residue polypeptide: Undecaprenyl-phosphate 4-deoxy-4-formamido-L-arabinose transferase (325 aa).

Helical transmembrane passes span 235-255 and 269-291; these read LSVVGSVIAVSGFLLAVLLMV and VFTLFALLFIFIGAQFVAMGLLG.

The protein belongs to the glycosyltransferase 2 family.

The protein localises to the cell inner membrane. It catalyses the reaction UDP-4-deoxy-4-formamido-beta-L-arabinose + di-trans,octa-cis-undecaprenyl phosphate = 4-deoxy-4-formamido-alpha-L-arabinopyranosyl di-trans,octa-cis-undecaprenyl phosphate + UDP. Its pathway is glycolipid biosynthesis; 4-amino-4-deoxy-alpha-L-arabinose undecaprenyl phosphate biosynthesis; 4-amino-4-deoxy-alpha-L-arabinose undecaprenyl phosphate from UDP-4-deoxy-4-formamido-beta-L-arabinose and undecaprenyl phosphate: step 1/2. It participates in bacterial outer membrane biogenesis; lipopolysaccharide biosynthesis. Its function is as follows. Catalyzes the transfer of 4-deoxy-4-formamido-L-arabinose from UDP to undecaprenyl phosphate. The modified arabinose is attached to lipid A and is required for resistance to polymyxin and cationic antimicrobial peptides. Essential for virulence in insects. This Photorhabdus laumondii subsp. laumondii (strain DSM 15139 / CIP 105565 / TT01) (Photorhabdus luminescens subsp. laumondii) protein is Undecaprenyl-phosphate 4-deoxy-4-formamido-L-arabinose transferase.